Consider the following 279-residue polypeptide: 3-methyl-2-oxobutanoate hydroxymethyltransferase (279 aa).

D44 and D83 together coordinate Mg(2+). 3-methyl-2-oxobutanoate is bound by residues 44-45 (DS), D83, and K113. E115 is a binding site for Mg(2+). Catalysis depends on E182, which acts as the Proton acceptor.

It belongs to the PanB family. As to quaternary structure, homodecamer; pentamer of dimers. Requires Mg(2+) as cofactor.

The protein resides in the cytoplasm. The catalysed reaction is 3-methyl-2-oxobutanoate + (6R)-5,10-methylene-5,6,7,8-tetrahydrofolate + H2O = 2-dehydropantoate + (6S)-5,6,7,8-tetrahydrofolate. Its pathway is cofactor biosynthesis; (R)-pantothenate biosynthesis; (R)-pantoate from 3-methyl-2-oxobutanoate: step 1/2. Functionally, catalyzes the reversible reaction in which hydroxymethyl group from 5,10-methylenetetrahydrofolate is transferred onto alpha-ketoisovalerate to form ketopantoate. The sequence is that of 3-methyl-2-oxobutanoate hydroxymethyltransferase from Dehalococcoides mccartyi (strain ATCC BAA-2100 / JCM 16839 / KCTC 5957 / BAV1).